The sequence spans 316 residues: 4-hydroxy-3-methylbut-2-enyl diphosphate reductase (316 aa).

Position 12 (cysteine 12) interacts with [4Fe-4S] cluster. (2E)-4-hydroxy-3-methylbut-2-enyl diphosphate is bound by residues histidine 41 and histidine 74. Dimethylallyl diphosphate-binding residues include histidine 41 and histidine 74. Isopentenyl diphosphate contacts are provided by histidine 41 and histidine 74. Cysteine 96 lines the [4Fe-4S] cluster pocket. Residue histidine 124 coordinates (2E)-4-hydroxy-3-methylbut-2-enyl diphosphate. Histidine 124 is a binding site for dimethylallyl diphosphate. Histidine 124 lines the isopentenyl diphosphate pocket. Residue glutamate 126 is the Proton donor of the active site. Threonine 167 serves as a coordination point for (2E)-4-hydroxy-3-methylbut-2-enyl diphosphate. Cysteine 197 serves as a coordination point for [4Fe-4S] cluster. Serine 225, serine 226, asparagine 227, and serine 269 together coordinate (2E)-4-hydroxy-3-methylbut-2-enyl diphosphate. The dimethylallyl diphosphate site is built by serine 225, serine 226, asparagine 227, and serine 269. Isopentenyl diphosphate-binding residues include serine 225, serine 226, asparagine 227, and serine 269.

The protein belongs to the IspH family. As to quaternary structure, homodimer. Requires [4Fe-4S] cluster as cofactor.

It carries out the reaction isopentenyl diphosphate + 2 oxidized [2Fe-2S]-[ferredoxin] + H2O = (2E)-4-hydroxy-3-methylbut-2-enyl diphosphate + 2 reduced [2Fe-2S]-[ferredoxin] + 2 H(+). It catalyses the reaction dimethylallyl diphosphate + 2 oxidized [2Fe-2S]-[ferredoxin] + H2O = (2E)-4-hydroxy-3-methylbut-2-enyl diphosphate + 2 reduced [2Fe-2S]-[ferredoxin] + 2 H(+). It participates in isoprenoid biosynthesis; dimethylallyl diphosphate biosynthesis; dimethylallyl diphosphate from (2E)-4-hydroxy-3-methylbutenyl diphosphate: step 1/1. The protein operates within isoprenoid biosynthesis; isopentenyl diphosphate biosynthesis via DXP pathway; isopentenyl diphosphate from 1-deoxy-D-xylulose 5-phosphate: step 6/6. Functionally, catalyzes the conversion of 1-hydroxy-2-methyl-2-(E)-butenyl 4-diphosphate (HMBPP) into a mixture of isopentenyl diphosphate (IPP) and dimethylallyl diphosphate (DMAPP). Acts in the terminal step of the DOXP/MEP pathway for isoprenoid precursor biosynthesis. The polypeptide is 4-hydroxy-3-methylbut-2-enyl diphosphate reductase (Pectobacterium atrosepticum (strain SCRI 1043 / ATCC BAA-672) (Erwinia carotovora subsp. atroseptica)).